We begin with the raw amino-acid sequence, 232 residues long: WFLEYSTSECHFYNGTQRVRLLERYFYNLEENLRFDSDVGEFRAVTELGRPDAENWNSQPEFLEQRRAAVDTYCRHNYEILDKFLVPRRVEPTVTVYPTKTQPLEHHNLLVCSVSDFYPGNIEVRWFRNGKEEKTGIVSTGLVRNGDWTFQTLVMLETVPQSGEVYTCQVEHPSLTDPVTVEWKAQSTSAQNKMLSGVGGFVLGLLFLGAGLFIYFRNQKGQSGLQPTGLLS.

Residues 1–90 (WFLEYSTSEC…LDKFLVPRRV (90 aa)) are beta-1. The Extracellular segment spans residues 1–193 (WFLEYSTSEC…KAQSTSAQNK (193 aa)). 2 cysteine pairs are disulfide-bonded: C10/C74 and C112/C168. A glycan (N-linked (GlcNAc...) asparagine) is linked at N14. The segment at 91–193 (EPTVTVYPTK…KAQSTSAQNK (103 aa)) is beta-2. The Ig-like C1-type domain maps to 92–182 (PTVTVYPTKT…PSLTDPVTVE (91 aa)). Residues 194–216 (MLSGVGGFVLGLLFLGAGLFIYF) form a helical membrane-spanning segment. At 217 to 232 (RNQKGQSGLQPTGLLS) the chain is on the cytoplasmic side.

Belongs to the MHC class II family. Ubiquitinated in immature dendritic cells leading to down-regulation of MHC class II.

The protein localises to the membrane. This is H-2 class II histocompatibility antigen, E-S beta chain (H2-Eb1) from Mus musculus (Mouse).